Reading from the N-terminus, the 443-residue chain is Thymidine phosphorylase (443 aa).

The protein belongs to the thymidine/pyrimidine-nucleoside phosphorylase family. Homodimer.

The enzyme catalyses thymidine + phosphate = 2-deoxy-alpha-D-ribose 1-phosphate + thymine. It functions in the pathway pyrimidine metabolism; dTMP biosynthesis via salvage pathway; dTMP from thymine: step 1/2. Functionally, the enzymes which catalyze the reversible phosphorolysis of pyrimidine nucleosides are involved in the degradation of these compounds and in their utilization as carbon and energy sources, or in the rescue of pyrimidine bases for nucleotide synthesis. This Shewanella sp. (strain MR-4) protein is Thymidine phosphorylase.